The chain runs to 354 residues: Nicotinate-nucleotide--dimethylbenzimidazole phosphoribosyltransferase (354 aa).

The Proton acceptor role is filled by glutamate 322.

It belongs to the CobT family.

It catalyses the reaction 5,6-dimethylbenzimidazole + nicotinate beta-D-ribonucleotide = alpha-ribazole 5'-phosphate + nicotinate + H(+). Its pathway is nucleoside biosynthesis; alpha-ribazole biosynthesis; alpha-ribazole from 5,6-dimethylbenzimidazole: step 1/2. Catalyzes the synthesis of alpha-ribazole-5'-phosphate from nicotinate mononucleotide (NAMN) and 5,6-dimethylbenzimidazole (DMB). In Solidesulfovibrio magneticus (strain ATCC 700980 / DSM 13731 / RS-1) (Desulfovibrio magneticus), this protein is Nicotinate-nucleotide--dimethylbenzimidazole phosphoribosyltransferase.